A 658-amino-acid polypeptide reads, in one-letter code: Transcription factor cep-1 (658 aa).

Residues Glu-238–Arg-428 mediate DNA binding. Zn(2+)-binding residues include Cys-319, His-322, Cys-375, and Cys-379. Positions Gln-450–Ser-477 are disordered. A compositionally biased stretch (low complexity) spans Thr-466 to Ser-476. Positions Gln-535–Ile-564 are required for tertiary structure stability of the protein.

It belongs to the p53 family. As to quaternary structure, homodimer. Interacts (via C-terminus domain) with prmt-5; not methylated by prmt-5. Interacts with cbp-1 (via HAT domain); cep-1 transcriptional activity may be inhibited by interaction with methylated cbp-1. Component of a complex that contains prmt-5 and cbp-1. Interacts with ape-1; the interaction inhibits pro-apoptotic activity of cep-1. The cofactor is Zn(2+). In terms of processing, phosphorylated in response to IR-induced DNA damage which is thought to be mediated by akt-1.

The protein localises to the nucleus. Functionally, transcriptional activator that binds the same DNA consensus sequence as p53. Has a role in normal development to ensure proper meiotic chromosome segregation. Promotes apoptosis under conditions of cellular and genotoxic stress in response to DNA damage, hypoxia, or starvation. However, not required for DNA repair in response to UV-C or to regulate cell-cycle progression. Regulates germline apoptosis in response to DNA damage. Required for induction of ced-13 in response to DNA damage. Its pro-apoptotic activity is inhibited when bound to ape-1 in vitro. Regulates germline proliferation by activating phg-1. Regulates DNA damage-induced apoptosis by inducing transcription of the programmed cell death activator egl-1. Negatively regulates lifespan. The protein is Transcription factor cep-1 of Caenorhabditis briggsae.